A 477-amino-acid chain; its full sequence is MGALMIQGTGSNVGKSLLVAGLCRAARRRGIDVAPFKPQNMSNNAAVTPDGGEIGRAQALQARAAGLAPSVHMNPVLLKPETDRAAQVVVQGRAATRAAAADYGALKARLMGAVLDSFARLRTTHELVLVEGAGSPAEVNLRARDIANMGFARAADVPVVLAGDIDRGGVIAQIVGTQAVIDPADAAMIRGFVINRFRGDPSLFDAGRRFIVERTGWPDLGLVPWFPDAVRLPAEDAVDLRRASGGGGLHIACPMLSRIANFDDLDPLAAEPAVRLSMVPPGHALPGDADLVILPGTKSTRGDLAFLREQGWDIDLAAHLRRGGRVLGICGGYQMLGRMIHDPEGHDGSPGSTPGLGLLDIETRMAPEKRLTRIAGRALGQPVEGYEIHMGRSEGPDCARPFAHIPEPDGATSPDGRVAGTYLHGLFSGDGFRAAWLGQFGAASALDYGAGVDEVLDRLAGHLEAHLDIDRLFALAR.

Residues 248–432 enclose the GATase cobBQ-type domain; the sequence is GLHIACPMLS…LHGLFSGDGF (185 aa). C330 serves as the catalytic Nucleophile. The active site involves H424.

The protein belongs to the CobB/CobQ family. CobQ subfamily.

It functions in the pathway cofactor biosynthesis; adenosylcobalamin biosynthesis. Functionally, catalyzes amidations at positions B, D, E, and G on adenosylcobyrinic A,C-diamide. NH(2) groups are provided by glutamine, and one molecule of ATP is hydrogenolyzed for each amidation. This Paracoccus denitrificans (strain Pd 1222) protein is Cobyric acid synthase.